The sequence spans 320 residues: Lipoyl synthase (320 aa).

The disordered stretch occupies residues 9–31 (ANDARPRHPEKAHRPDQPIQRKP). Basic and acidic residues predominate over residues 12 to 31 (ARPRHPEKAHRPDQPIQRKP). The [4Fe-4S] cluster site is built by C60, C65, C71, C86, C90, C93, and S299. The 217-residue stretch at 72–288 (WEKKHATFMI…ETTAYAKGFL (217 aa)) folds into the Radical SAM core domain.

It belongs to the radical SAM superfamily. Lipoyl synthase family. The cofactor is [4Fe-4S] cluster.

Its subcellular location is the cytoplasm. It carries out the reaction [[Fe-S] cluster scaffold protein carrying a second [4Fe-4S](2+) cluster] + N(6)-octanoyl-L-lysyl-[protein] + 2 oxidized [2Fe-2S]-[ferredoxin] + 2 S-adenosyl-L-methionine + 4 H(+) = [[Fe-S] cluster scaffold protein] + N(6)-[(R)-dihydrolipoyl]-L-lysyl-[protein] + 4 Fe(3+) + 2 hydrogen sulfide + 2 5'-deoxyadenosine + 2 L-methionine + 2 reduced [2Fe-2S]-[ferredoxin]. The protein operates within protein modification; protein lipoylation via endogenous pathway; protein N(6)-(lipoyl)lysine from octanoyl-[acyl-carrier-protein]: step 2/2. Functionally, catalyzes the radical-mediated insertion of two sulfur atoms into the C-6 and C-8 positions of the octanoyl moiety bound to the lipoyl domains of lipoate-dependent enzymes, thereby converting the octanoylated domains into lipoylated derivatives. The polypeptide is Lipoyl synthase (Methylobacterium nodulans (strain LMG 21967 / CNCM I-2342 / ORS 2060)).